The chain runs to 531 residues: RCC1 and BTB domain-containing protein 1 (531 aa).

6 RCC1 repeats span residues 40–91 (NDEV…LLST), 93–145 (DGVV…ALAA), 147–198 (GEVF…AVLD), 199–250 (NGEV…ALTD), 252–302 (GLLY…AAKT), and 304–356 (GGHV…FLTV). BTB domains lie at 370–437 (ADLK…DLPP) and 470–499 (ENAF…INHL).

As to expression, ubiquitously expressed. In the retina, present in the nerve fiber layer and to a lesser extent in the inner and outer plexiform layers (at protein level).

It localises to the nucleus. Functionally, may be involved in cell cycle regulation by chromatin remodeling. The sequence is that of RCC1 and BTB domain-containing protein 1 (RCBTB1) from Homo sapiens (Human).